The chain runs to 183 residues: MAFTMLRPMAARVLYPDIGMLSEDEENRSESDTSDQSYGCCEGAEARRKVPRKTGPMVMVKQRQAANARERDRTQSVNTAFTALRTLIPTEPVDRKLSKIETLRLASSYIAHLANVLLLGEGCEDGQPCFSAIYGAKGDLDGRQPRSICTFCLSNQRKGGGRRDLGGNCLKVRGVTPLRVARR.

Residues 24–46 (DEENRSESDTSDQSYGCCEGAEA) form a disordered region. The bHLH domain maps to 61 to 113 (KQRQAANARERDRTQSVNTAFTALRTLIPTEPVDRKLSKIETLRLASSYIAHL).

As to quaternary structure, heterodimer; efficient DNA binding requires dimerization with another bHLH protein.

The protein resides in the nucleus. Early transcription factor that plays a key role in somitogenesis, paraxial mesoderm development and regulation of stem cell pluripotency. Essential for the mesenchymal to epithelial transition associated with somite formation. Required for somite morphogenesis, thereby regulating patterning of the axial skeleton and skeletal muscles. Also plays a key role in regulation of stem cell pluripotency. Promotes pluripotency exit of embryonic stem cells (ESCs) by priming ESCs for differentiation. Acts as a key regulator of self-renewal of hematopoietic stem cells (HSCs) by mediating HSCs quiescence and long-term self-renewal. Acts by forming a heterodimer with another helix-loop-helix (bHLH) protein, that binds DNA on E-box motifs (5'-CANNTG-3') and activates transcription of target genes. The polypeptide is Transcription factor 15 (TCF15) (Gallus gallus (Chicken)).